We begin with the raw amino-acid sequence, 206 residues long: Inner membrane-spanning protein YciB (206 aa).

5 helical membrane passes run Ile-22–Phe-42, Met-50–Asp-70, Trp-76–Gly-96, Ile-118–Phe-138, and Phe-148–Ile-168. Positions Leu-178–Glu-189 are enriched in basic and acidic residues. Residues Leu-178 to Lys-206 form a disordered region. The span at Gln-191–Lys-206 shows a compositional bias: polar residues.

It belongs to the YciB family.

The protein resides in the cell inner membrane. Its function is as follows. Plays a role in cell envelope biogenesis, maintenance of cell envelope integrity and membrane homeostasis. The sequence is that of Inner membrane-spanning protein YciB from Vibrio atlanticus (strain LGP32) (Vibrio splendidus (strain Mel32)).